A 303-amino-acid chain; its full sequence is Protein SULFUR DEFICIENCY-INDUCED 2 (303 aa).

The stretch at 62–89 (RVDSALKDMALLMKQQNRAEEAIDAIQS) forms a coiled coil. 4 TPR repeats span residues 64–97 (DSALKDMALLMKQQNRAEEAIDAIQSFRDLCSRQ), 100–133 (ESLDNVLIDLYKKCGRIEEQVELLKQKLWMIYQG), 160–193 (SRILGNLGWAYMQLMDYTAAEAVYRKAQLIEPDA), and 195–226 (KACNLCTCLIKQGKHDEARSILFRDVLMENKE). Residues 232 to 253 (RLMARVQELLSELKPQEEEAAA) adopt a coiled-coil conformation.

It belongs to the MS5 protein family.

It is found in the nucleus. Its function is as follows. Involved in the utilization of stored sulfate under sulfur-deficient conditions. This chain is Protein SULFUR DEFICIENCY-INDUCED 2, found in Arabidopsis thaliana (Mouse-ear cress).